A 117-amino-acid chain; its full sequence is Ribonuclease P protein component (117 aa).

The protein belongs to the RnpA family. Consists of a catalytic RNA component (M1 or rnpB) and a protein subunit.

The catalysed reaction is Endonucleolytic cleavage of RNA, removing 5'-extranucleotides from tRNA precursor.. RNaseP catalyzes the removal of the 5'-leader sequence from pre-tRNA to produce the mature 5'-terminus. It can also cleave other RNA substrates such as 4.5S RNA. The protein component plays an auxiliary but essential role in vivo by binding to the 5'-leader sequence and broadening the substrate specificity of the ribozyme. This Limosilactobacillus reuteri subsp. reuteri (strain JCM 1112) (Lactobacillus reuteri) protein is Ribonuclease P protein component.